The chain runs to 160 residues: 3-hydroxyacyl-[acyl-carrier-protein] dehydratase FabZ (160 aa).

Residue His63 is part of the active site.

This sequence belongs to the thioester dehydratase family. FabZ subfamily.

The protein localises to the cytoplasm. It carries out the reaction a (3R)-hydroxyacyl-[ACP] = a (2E)-enoyl-[ACP] + H2O. In terms of biological role, involved in unsaturated fatty acids biosynthesis. Catalyzes the dehydration of short chain beta-hydroxyacyl-ACPs and long chain saturated and unsaturated beta-hydroxyacyl-ACPs. The protein is 3-hydroxyacyl-[acyl-carrier-protein] dehydratase FabZ of Xylella fastidiosa (strain 9a5c).